The following is a 366-amino-acid chain: Alanine racemase (366 aa).

The active-site Proton acceptor; specific for D-alanine is the lysine 40. Lysine 40 carries the N6-(pyridoxal phosphate)lysine modification. Arginine 136 provides a ligand contact to substrate. Residue tyrosine 263 is the Proton acceptor; specific for L-alanine of the active site. Methionine 310 contributes to the substrate binding site.

The protein belongs to the alanine racemase family. It depends on pyridoxal 5'-phosphate as a cofactor.

The catalysed reaction is L-alanine = D-alanine. It participates in amino-acid biosynthesis; D-alanine biosynthesis; D-alanine from L-alanine: step 1/1. Functionally, catalyzes the interconversion of L-alanine and D-alanine. May also act on other amino acids. This chain is Alanine racemase (alr), found in Streptococcus pyogenes serotype M12 (strain MGAS2096).